A 457-amino-acid chain; its full sequence is Protein translocase subunit SecY (457 aa).

Transmembrane regions (helical) follow at residues 17-37 (IFFTFSLLALCRIGVFIPVPG), 75-95 (IALGVVPYISASIIVQLLVVF), 118-138 (TRLFTLVLACVQSLLFAKFAL), 162-182 (WVFYLTTVVVMITGTLLLMWV), 195-215 (ISLIITLGILASFPSVLGSIF), 230-250 (IVSLLILCAVFVFVLMATVLI), 287-307 (VIPVIFASSLLMFPATIGQFL), 326-346 (VAYSIFYVLLIIFFTYFWTAT), 386-406 (LLGAVFLAVVAILPSILGRIL), and 412-432 (VSYFLGGTAMLIVVGVILDTM).

Belongs to the SecY/SEC61-alpha family. Component of the Sec protein translocase complex. Heterotrimer consisting of SecY, SecE and SecG subunits. The heterotrimers can form oligomers, although 1 heterotrimer is thought to be able to translocate proteins. Interacts with the ribosome. Interacts with SecDF, and other proteins may be involved. Interacts with SecA.

The protein resides in the cell inner membrane. Functionally, the central subunit of the protein translocation channel SecYEG. Consists of two halves formed by TMs 1-5 and 6-10. These two domains form a lateral gate at the front which open onto the bilayer between TMs 2 and 7, and are clamped together by SecE at the back. The channel is closed by both a pore ring composed of hydrophobic SecY resides and a short helix (helix 2A) on the extracellular side of the membrane which forms a plug. The plug probably moves laterally to allow the channel to open. The ring and the pore may move independently. This chain is Protein translocase subunit SecY, found in Chlamydia trachomatis serovar D (strain ATCC VR-885 / DSM 19411 / UW-3/Cx).